A 461-amino-acid polypeptide reads, in one-letter code: Cysteine--tRNA ligase (461 aa).

Cys30 serves as a coordination point for Zn(2+). Residues 32 to 42 (VTIYDLCHIGH) carry the 'HIGH' region motif. Cys211, His236, and Glu240 together coordinate Zn(2+). The short motif at 268-272 (KMSKS) is the 'KMSKS' region element. Lys271 provides a ligand contact to ATP.

It belongs to the class-I aminoacyl-tRNA synthetase family. In terms of assembly, monomer. The cofactor is Zn(2+).

It is found in the cytoplasm. It catalyses the reaction tRNA(Cys) + L-cysteine + ATP = L-cysteinyl-tRNA(Cys) + AMP + diphosphate. This is Cysteine--tRNA ligase from Shewanella putrefaciens (strain CN-32 / ATCC BAA-453).